The following is an 86-amino-acid chain: Putative membrane protein insertion efficiency factor (86 aa).

Positions 66-86 are disordered; it reads FSKGGFDPVPPHDGVPGKKED.

This sequence belongs to the UPF0161 family.

It localises to the cell inner membrane. Functionally, could be involved in insertion of integral membrane proteins into the membrane. The sequence is that of Putative membrane protein insertion efficiency factor from Chlorobium luteolum (strain DSM 273 / BCRC 81028 / 2530) (Pelodictyon luteolum).